The chain runs to 72 residues: Translation initiation factor IF-1 (72 aa).

Positions 1-72 constitute an S1-like domain; it reads MAKEDSIEMQ…SKGRIVFRAR (72 aa).

Belongs to the IF-1 family. Component of the 30S ribosomal translation pre-initiation complex which assembles on the 30S ribosome in the order IF-2 and IF-3, IF-1 and N-formylmethionyl-tRNA(fMet); mRNA recruitment can occur at any time during PIC assembly.

It localises to the cytoplasm. In terms of biological role, one of the essential components for the initiation of protein synthesis. Stabilizes the binding of IF-2 and IF-3 on the 30S subunit to which N-formylmethionyl-tRNA(fMet) subsequently binds. Helps modulate mRNA selection, yielding the 30S pre-initiation complex (PIC). Upon addition of the 50S ribosomal subunit IF-1, IF-2 and IF-3 are released leaving the mature 70S translation initiation complex. This is Translation initiation factor IF-1 from Psychromonas ingrahamii (strain DSM 17664 / CCUG 51855 / 37).